A 179-amino-acid polypeptide reads, in one-letter code: Oryzines biosynthesis cluster protein J (179 aa).

In terms of domain architecture, Cupin type-2 spans 88 to 148 (YVDYHPGCEP…NHCWRNPSKT (61 aa)).

The protein belongs to the oryJ family.

It participates in secondary metabolite biosynthesis. In terms of biological role, part of the gene cluster that mediates the biosynthesis of oryzines, natural products with an unusual maleidride backbone. The two subunits of the fungal fatty acid synthase oryfasA and oryfasB probably form octenoic acid. This fatty acid is most likely activated by the acyl-CoA ligase oryP to give octenyl-CoA before the citrate synthase-like protein oryE catalyzes condensation with oxaloacetate to form tricarboxylic acid. The next steps of the pathways are conjectural, but a favorite possible route has been proposed, beginning with decarboxylation and concomitant dehydration by the decarboxylase oryM, followed by tautomerization, which may lead to the production of a diene intermediate. Reduction of this diene intermediate could give the known metabolite piliformic acid. On the pathway to oryzine B and oryzine A, however, hydroxylation of the diene by the alpha-ketoglutarate-dependent dioxygenase oryG and lactonisation by the lactonohydrolases oryH or oryL could give oryzine B directly. Finally, enoyl reduction by the dehydrogenase oryD would then convert oryzine B into oryzine A. The chain is Oryzines biosynthesis cluster protein J from Aspergillus oryzae (strain ATCC 42149 / RIB 40) (Yellow koji mold).